The following is a 269-amino-acid chain: NAD kinase (269 aa).

Aspartate 45 acts as the Proton acceptor in catalysis. NAD(+) is bound by residues 45–46, 121–122, arginine 147, aspartate 149, 160–165, and alanine 184; these read DG, NE, and TAYNRS.

The protein belongs to the NAD kinase family. The cofactor is a divalent metal cation.

The protein localises to the cytoplasm. The enzyme catalyses NAD(+) + ATP = ADP + NADP(+) + H(+). In terms of biological role, involved in the regulation of the intracellular balance of NAD and NADP, and is a key enzyme in the biosynthesis of NADP. Catalyzes specifically the phosphorylation on 2'-hydroxyl of the adenosine moiety of NAD to yield NADP. The protein is NAD kinase of Pediococcus pentosaceus (strain ATCC 25745 / CCUG 21536 / LMG 10740 / 183-1w).